The sequence spans 398 residues: Enoyl-[acyl-carrier-protein] reductase [NADH] (398 aa).

Residues 48 to 53 (GSSTGY), 74 to 75 (FE), 111 to 112 (DA), and 139 to 140 (LA) contribute to the NAD(+) site. Tyr-225 provides a ligand contact to substrate. The active-site Proton donor is the Tyr-235. NAD(+)-binding positions include Lys-244 and 273-275 (VVT).

The protein belongs to the TER reductase family. Monomer.

It catalyses the reaction a 2,3-saturated acyl-[ACP] + NAD(+) = a (2E)-enoyl-[ACP] + NADH + H(+). The protein operates within lipid metabolism; fatty acid biosynthesis. Functionally, involved in the final reduction of the elongation cycle of fatty acid synthesis (FAS II). Catalyzes the reduction of a carbon-carbon double bond in an enoyl moiety that is covalently linked to an acyl carrier protein (ACP). This chain is Enoyl-[acyl-carrier-protein] reductase [NADH], found in Pseudomonas paraeruginosa (strain DSM 24068 / PA7) (Pseudomonas aeruginosa (strain PA7)).